Here is a 78-residue protein sequence, read N- to C-terminus: Small ribosomal subunit protein uS17 (78 aa).

The protein belongs to the universal ribosomal protein uS17 family. In terms of assembly, part of the 30S ribosomal subunit.

Its function is as follows. One of the primary rRNA binding proteins, it binds specifically to the 5'-end of 16S ribosomal RNA. This chain is Small ribosomal subunit protein uS17, found in Agrobacterium fabrum (strain C58 / ATCC 33970) (Agrobacterium tumefaciens (strain C58)).